A 65-amino-acid polypeptide reads, in one-letter code: Large ribosomal subunit protein bL35 (65 aa).

The disordered stretch occupies residues 1 to 30 (MPKMKTVSGAAKRFKKTGSGRFKSKQSHLR). Basic residues predominate over residues 12-30 (KRFKKTGSGRFKSKQSHLR).

The protein belongs to the bacterial ribosomal protein bL35 family.

The protein is Large ribosomal subunit protein bL35 of Alteromonas mediterranea (strain DSM 17117 / CIP 110805 / LMG 28347 / Deep ecotype).